The chain runs to 465 residues: Glutamate--tRNA ligase (465 aa).

Residues 11–21 carry the 'HIGH' region motif; sequence PSPTGFIHLGN. Over residues 120-131 the composition is skewed to basic and acidic residues; it reads KPRYDGTWRPEP. Residues 120–139 form a disordered region; that stretch reads KPRYDGTWRPEPGKVLPTPP. The short motif at 243 to 247 is the 'KMSKS' region element; the sequence is KMSKR. Lys246 lines the ATP pocket.

Belongs to the class-I aminoacyl-tRNA synthetase family. Glutamate--tRNA ligase type 1 subfamily. Monomer.

Its subcellular location is the cytoplasm. It carries out the reaction tRNA(Glu) + L-glutamate + ATP = L-glutamyl-tRNA(Glu) + AMP + diphosphate. In terms of biological role, catalyzes the attachment of glutamate to tRNA(Glu) in a two-step reaction: glutamate is first activated by ATP to form Glu-AMP and then transferred to the acceptor end of tRNA(Glu). This chain is Glutamate--tRNA ligase, found in Ralstonia nicotianae (strain ATCC BAA-1114 / GMI1000) (Ralstonia solanacearum).